A 436-amino-acid chain; its full sequence is 3-ketoacyl-CoA thiolase (436 aa).

Catalysis depends on C99, which acts as the Acyl-thioester intermediate. Residues H392 and C422 each act as proton acceptor in the active site.

It belongs to the thiolase-like superfamily. Thiolase family. As to quaternary structure, heterotetramer of two alpha chains (FadJ) and two beta chains (FadI).

It is found in the cytoplasm. The enzyme catalyses an acyl-CoA + acetyl-CoA = a 3-oxoacyl-CoA + CoA. It participates in lipid metabolism; fatty acid beta-oxidation. Its function is as follows. Catalyzes the final step of fatty acid oxidation in which acetyl-CoA is released and the CoA ester of a fatty acid two carbons shorter is formed. The sequence is that of 3-ketoacyl-CoA thiolase from Shewanella putrefaciens (strain CN-32 / ATCC BAA-453).